Here is a 135-residue protein sequence, read N- to C-terminus: Putative pre-16S rRNA nuclease (135 aa).

This sequence belongs to the YqgF nuclease family.

Its subcellular location is the cytoplasm. Functionally, could be a nuclease involved in processing of the 5'-end of pre-16S rRNA. This chain is Putative pre-16S rRNA nuclease, found in Clostridium novyi (strain NT).